The chain runs to 292 residues: Sulfofructosephosphate aldolase (292 aa).

K193 serves as the catalytic Schiff-base intermediate with substrate.

Belongs to the aldolase LacD family. In terms of assembly, homotetramer.

It carries out the reaction 6-deoxy-6-sulfo-D-fructose 1-phosphate = (2S)-3-sulfolactaldehyde + dihydroxyacetone phosphate. Cleaves 6-deoxy-6-sulfo-D-fructose 1-phosphate (SFP) to form dihydroxyacetone phosphate (DHAP) and 3-sulfolactaldehyde (SLA). The polypeptide is Sulfofructosephosphate aldolase (yihT) (Escherichia coli (strain K12)).